The sequence spans 1033 residues: RNA cytidine acetyltransferase (1033 aa).

Residues 285–294 (GRGKSAALGL) and arginine 465 contribute to the ATP site. The N-acetyltransferase domain maps to 560 to 694 (VDLKNPKLPD…IHVRDAKTMP (135 aa)). Acetyl-CoA-binding positions include 626 to 628 (IAV), 633 to 639 (VKMGYGT), and arginine 727. The interval 988 to 1033 (ENQIQKTNGKGARVVSIKGEKRKNNSLDASDKKTKEKPSSKKKFRK) is disordered. Residues 1005-1026 (KGEKRKNNSLDASDKKTKEKPS) show a composition bias toward basic and acidic residues.

Belongs to the RNA cytidine acetyltransferase family. NAT10 subfamily. Interacts with tan1.

The protein localises to the nucleus. Its subcellular location is the nucleolus. The enzyme catalyses a cytidine in 18S rRNA + acetyl-CoA + ATP + H2O = an N(4)-acetylcytidine in 18S rRNA + ADP + phosphate + CoA + H(+). It catalyses the reaction a cytidine in tRNA + acetyl-CoA + ATP + H2O = an N(4)-acetylcytidine in tRNA + ADP + phosphate + CoA + H(+). Its function is as follows. RNA cytidine acetyltransferase with specificity toward both 18S rRNA and tRNAs. Catalyzes the formation of N(4)-acetylcytidine (ac4C) at positions 1297 and 1815 in 18S rRNA. Required for early nucleolar cleavages of precursor rRNA at sites A0, A1 and A2 during 18S rRNA synthesis. Catalyzes the formation of ac4C in serine and leucine tRNAs. Requires the tRNA-binding adapter protein tan1 for full tRNA acetyltransferase activity but not for 18S rRNA acetylation. The polypeptide is RNA cytidine acetyltransferase (Schizosaccharomyces pombe (strain 972 / ATCC 24843) (Fission yeast)).